A 140-amino-acid polypeptide reads, in one-letter code: ECDVLERFKVKHQWQTVFSEAHRTEFSLHFWKEFLHDHPSLVELFTRVNGANIYSPEFQAHGIRVLAGLDSVIGVLDEIPTLTVQLAHLKAQHTERGTKPEYFDLFGKHLASHLGDELGTHFDYAAFRDCYDFIASGIKP.

The region spanning 1-140 is the Globin domain; that stretch reads ECDVLERFKV…YDFIASGIKP (140 aa). Cys-2 and Cys-130 form a disulfide bridge. A heme b-binding site is contributed by His-93.

Belongs to the globin family. In terms of assembly, the giant hemoglobins of worms are formed of a monomeric subunit and a disulfide-bonded trimer. This subunit is monomeric.

Its subcellular location is the secreted. The chain is Extracellular globin-1 from Metaphire hilgendorfi (Earthworm).